The sequence spans 321 residues: Sphingolipid delta(4)-desaturase DES1 (321 aa).

The next 6 membrane-spanning stretches (helical) occupy residues 41 to 61 (PNFK…LFVV), 68 to 88 (WLIV…MLAV), 107 to 127 (ILGF…FKKY), 157 to 177 (FGKF…PLII), 187 to 206 (IINT…FLGW), and 208 to 230 (PLAY…GHFI).

The protein belongs to the fatty acid desaturase type 1 family. DEGS subfamily. As to expression, testes.

It is found in the endoplasmic reticulum membrane. It localises to the membrane. The protein localises to the mitochondrion. It carries out the reaction an N-acylsphinganine + 2 Fe(II)-[cytochrome b5] + O2 + 2 H(+) = an N-acylsphing-4-enine + 2 Fe(III)-[cytochrome b5] + 2 H2O. The catalysed reaction is an N-acyleicosasphinganine + 2 Fe(II)-[cytochrome b5] + O2 + 2 H(+) = an N-acyleicosasphing-4-enine + 2 Fe(III)-[cytochrome b5] + 2 H2O. The protein operates within sphingolipid metabolism. In terms of biological role, has sphingolipid-delta-4-desaturase activity. Converts sphinganine-containing sphingolipids (such as N-acylsphinganines or dihydroceramides) into sphingolipids containing the delta-4-desaturated sphingoid base (E)-sphing-4-enine (such as N-acylsphing-4-enines or ceramides), which are required for many different functions (structural functions as well as signaling). Required to initiate spermatid differentiation among other signals. Required for central spindle assembly and cytokinesis during male meiosis, may act as part of an anchoring mechanism that links membrane-bounded cellular compartments to components of the cytoskeleton. The protein is Sphingolipid delta(4)-desaturase DES1 of Drosophila melanogaster (Fruit fly).